Consider the following 68-residue polypeptide: Beta-defensin 1 (68 aa).

Residues 1–21 (MRTSYLLLFTLCLLLSEMASG) form the signal peptide. A propeptide spanning residues 22–32 (GNFLTGLGHRS) is cleaved from the precursor. 3 disulfide bridges follow: Cys-37–Cys-66, Cys-44–Cys-59, and Cys-49–Cys-67.

The protein belongs to the beta-defensin family. Monomer. Homodimer.

The protein resides in the secreted. The protein localises to the membrane. In terms of biological role, has bactericidal activity. May act as a ligand for C-C chemokine receptor CCR6. Positively regulates the sperm motility and bactericidal activity in a CCR6-dependent manner. Binds to CCR6 and triggers Ca2+ mobilization in the sperm which is important for its motility. In Pan troglodytes (Chimpanzee), this protein is Beta-defensin 1 (DEFB1).